Here is a 94-residue protein sequence, read N- to C-terminus: Pyrimidine/purine nucleoside phosphorylase (94 aa).

Belongs to the nucleoside phosphorylase PpnP family.

It catalyses the reaction a purine D-ribonucleoside + phosphate = a purine nucleobase + alpha-D-ribose 1-phosphate. It carries out the reaction adenosine + phosphate = alpha-D-ribose 1-phosphate + adenine. The enzyme catalyses cytidine + phosphate = cytosine + alpha-D-ribose 1-phosphate. The catalysed reaction is guanosine + phosphate = alpha-D-ribose 1-phosphate + guanine. It catalyses the reaction inosine + phosphate = alpha-D-ribose 1-phosphate + hypoxanthine. It carries out the reaction thymidine + phosphate = 2-deoxy-alpha-D-ribose 1-phosphate + thymine. The enzyme catalyses uridine + phosphate = alpha-D-ribose 1-phosphate + uracil. The catalysed reaction is xanthosine + phosphate = alpha-D-ribose 1-phosphate + xanthine. Catalyzes the phosphorolysis of diverse nucleosides, yielding D-ribose 1-phosphate and the respective free bases. Can use uridine, adenosine, guanosine, cytidine, thymidine, inosine and xanthosine as substrates. Also catalyzes the reverse reactions. The sequence is that of Pyrimidine/purine nucleoside phosphorylase from Teredinibacter turnerae (strain ATCC 39867 / T7901).